The following is a 195-amino-acid chain: Nicotinamide riboside kinase 1 (195 aa).

10 to 18 (GVTNGGKTT) contributes to the ATP binding site. Residues Thr17 and Asp36 each coordinate Mg(2+). Asp36 acts as the Proton acceptor in catalysis. Substrate is bound by residues 36–39 (DDFF) and 55–56 (YD). Arg128 contacts ATP. Substrate contacts are provided by residues Arg129 and 134–135 (YE). ATP is bound by residues 132 to 134 (RVY) and 172 to 174 (RSE).

It belongs to the uridine kinase family. NRK subfamily. Monomer.

It catalyses the reaction beta-nicotinamide D-riboside + ATP = beta-nicotinamide D-ribonucleotide + ADP + H(+). It carries out the reaction beta-D-ribosylnicotinate + ATP = nicotinate beta-D-ribonucleotide + ADP + H(+). The protein operates within cofactor biosynthesis; NAD(+) biosynthesis. Functionally, catalyzes the phosphorylation of nicotinamide riboside (NR) and nicotinic acid riboside (NaR) to form nicotinamide mononucleotide (NMN) and nicotinic acid mononucleotide (NaMN). The polypeptide is Nicotinamide riboside kinase 1 (Nmrk1) (Mus musculus (Mouse)).